The following is a 472-amino-acid chain: F-box protein At3g03040 (472 aa).

Positions 1–49 constitute an F-box domain; sequence MDLLSSLPDEVRCLILSFLTTKESASTSVLSKKWRNLFALVPNLDFDDS.

This is F-box protein At3g03040 from Arabidopsis thaliana (Mouse-ear cress).